We begin with the raw amino-acid sequence, 214 residues long: 3,4-dihydroxy-2-butanone 4-phosphate synthase (214 aa).

D-ribulose 5-phosphate contacts are provided by residues 37–38 (RE), D42, 150–154 (RPGHT), and E174. E38 provides a ligand contact to Mg(2+). H153 lines the Mg(2+) pocket.

This sequence belongs to the DHBP synthase family. Homodimer. Mg(2+) serves as cofactor. It depends on Mn(2+) as a cofactor.

It catalyses the reaction D-ribulose 5-phosphate = (2S)-2-hydroxy-3-oxobutyl phosphate + formate + H(+). It functions in the pathway cofactor biosynthesis; riboflavin biosynthesis; 2-hydroxy-3-oxobutyl phosphate from D-ribulose 5-phosphate: step 1/1. In terms of biological role, catalyzes the conversion of D-ribulose 5-phosphate to formate and 3,4-dihydroxy-2-butanone 4-phosphate. This is 3,4-dihydroxy-2-butanone 4-phosphate synthase from Mannheimia succiniciproducens (strain KCTC 0769BP / MBEL55E).